Here is a 361-residue protein sequence, read N- to C-terminus: MWVNDINIMSYQAMARNYINGKWRHAPNRADPCGVCRPVPLLCPVNGGACDPMGPCGLAASSKCSPQCGPCSPNFPYPTGPGGTTICDFAAAACGGATGNVCNMCPGGSCGGIGGCYGANSPCGLNGTIGCGGCGSGCCGSQVGTGFHLARGSCDPNYVSGCSSPCGTCRPPNAPSTLCDLALLGISPVPLGMPVSQSVTTLGIPPGAVPPPPPVPITGGVPPFGGPSCGPTVFGGGSFGGSCGGSCGGSCGGGSCGGGSCGGKSGKKDCCKSCRKGKKCKCKKKKCCGVEQFSVCTDGPSIQIGGPCAPPPPPIPPIPGVGVSYDTQVGPAIPLNQCDYPWAEYWPWVVGSWAGQYTNEM.

This is an uncharacterized protein from Acanthamoeba polyphaga (Amoeba).